The chain runs to 681 residues: Translation factor GUF1 homolog, chloroplastic (681 aa).

A chloroplast-targeting transit peptide spans 1–51 (MAMASAMDLSSPPTFFLSGTSTSSPSLRRLSSISVSGFRRHSNRKLQILCQ). Residues 84 to 265 (SNIRNFSIIA…AIVQRIPAPL (182 aa)) form the tr-type G domain. GTP-binding positions include 93–100 (AHIDHGKS), 158–162 (DTPGH), and 212–215 (NKID).

Belongs to the TRAFAC class translation factor GTPase superfamily. Classic translation factor GTPase family. LepA subfamily.

It localises to the plastid. It is found in the chloroplast. The enzyme catalyses GTP + H2O = GDP + phosphate + H(+). Functionally, promotes chloroplast protein synthesis. May act as a fidelity factor of the translation reaction, by catalyzing a one-codon backward translocation of tRNAs on improperly translocated ribosomes. The polypeptide is Translation factor GUF1 homolog, chloroplastic (Arabidopsis thaliana (Mouse-ear cress)).